Here is a 268-residue protein sequence, read N- to C-terminus: Glucosamine-6-phosphate deaminase (268 aa).

Asp72 functions as the Proton acceptor; for enolization step in the catalytic mechanism. Asp141 (for ring-opening step) is an active-site residue. The active-site Proton acceptor; for ring-opening step is the His143. Glu148 serves as the catalytic For ring-opening step.

The protein belongs to the glucosamine/galactosamine-6-phosphate isomerase family. NagB subfamily. In terms of assembly, homohexamer.

The catalysed reaction is alpha-D-glucosamine 6-phosphate + H2O = beta-D-fructose 6-phosphate + NH4(+). It functions in the pathway amino-sugar metabolism; N-acetylneuraminate degradation; D-fructose 6-phosphate from N-acetylneuraminate: step 5/5. With respect to regulation, allosterically activated by N-acetylglucosamine 6-phosphate (GlcNAc6P). In terms of biological role, catalyzes the reversible isomerization-deamination of glucosamine 6-phosphate (GlcN6P) to form fructose 6-phosphate (Fru6P) and ammonium ion. In Histophilus somni (strain 2336) (Haemophilus somnus), this protein is Glucosamine-6-phosphate deaminase.